We begin with the raw amino-acid sequence, 168 residues long: MPRSRITGNLIDKTFSIVANILLRIIPTTSGEKEAFTYYRDGMSAQSEGNYAEALQNYYEAMRLEIDPYDRSYILYNIGLIHTSNGEHTKALEYYFRALERNPFLPQAFNNMAVICHYRGEQAIRQGDSEIAEAWFDQAAEYWKQAIALTPGNYIEAQNWLKITRRFE.

3 TPR repeats span residues 35 to 68 (AFTYYRDGMSAQSEGNYAEALQNYYEAMRLEIDP), 72 to 105 (SYILYNIGLIHTSNGEHTKALEYYFRALERNPFL), and 120 to 153 (GEQAIRQGDSEIAEAWFDQAAEYWKQAIALTPGN).

It belongs to the Ycf3 family.

Its subcellular location is the plastid. It localises to the chloroplast thylakoid membrane. Essential for the assembly of the photosystem I (PSI) complex. May act as a chaperone-like factor to guide the assembly of the PSI subunits. The sequence is that of Photosystem I assembly protein Ycf3 from Populus alba (White poplar).